The primary structure comprises 131 residues: Agouti-signaling protein (131 aa).

An N-terminal signal peptide occupies residues 1 to 20 (MNIFRLLLATLLVSLCFLTA). A glycan (N-linked (GlcNAc...) asparagine) is linked at N38. The disordered stretch occupies residues 57-104 (KSKKISRKEAEKKRSSKKKASMKNVARPRPPPPNPCVATRNSCKSPAP). 5 disulfide bridges follow: C92–C107, C99–C113, C106–C124, C110–C131, and C115–C122. One can recognise an Agouti domain in the interval 92–131 (CVATRNSCKSPAPACCDPCASCQCRFFRSACTCRVLSPSC).

The protein resides in the secreted. Functionally, involved in the regulation of melanogenesis. The binding of ASP to MC1R precludes alpha-MSH initiated signaling and thus blocks production of cAMP, leading to a down-regulation of eumelanogenesis (brown/black pigment) and thus increasing synthesis of pheomelanin (yellow/red pigment). This is Agouti-signaling protein (ASIP) from Vulpes vulpes (Red fox).